The primary structure comprises 646 residues: Secretogranin-1 (646 aa).

The first 20 residues, 1 to 20, serve as a signal peptide directing secretion; it reads MQPAALLGLLGATVVAAVSS. An intrachain disulfide couples cysteine 36 to cysteine 57. The segment covering 67 to 90 has biased composition (basic and acidic residues); the sequence is ELKNEEKSENENTRFEVRLLRDPA. Residues 67–483 are disordered; the sequence is ELKNEEKSEN…GKQYAPHHIT (417 aa). Residue serine 74 is modified to Phosphoserine. Residues threonine 79 and threonine 92 each carry the phosphothreonine modification. Phosphoserine occurs at positions 93, 99, 100, and 104. O-linked (Xyl...) (chondroitin sulfate) serine glycosylation occurs at serine 93. Residue threonine 113 is glycosylated (O-linked (GalNAc...) threonine). Composition is skewed to basic and acidic residues over residues 119 to 128 and 137 to 173; these read SGGHSRERAG and KEAK…ERLS. A phosphoserine mark is found at serine 123, serine 146, and serine 168. Residues 182–191 are compositionally biased toward polar residues; that stretch reads AFLNQRNQTP. The O-linked (GalNAc...) threonine glycan is linked to threonine 190. Serine 205 carries the post-translational modification Phosphoserine. The segment covering 208–228 has biased composition (basic and acidic residues); that stretch reads GLEKSHSRERSSQESGEETKS. An O-linked (Xyl...) (chondroitin sulfate) serine glycan is attached at serine 222. Residues 260 to 270 show a composition bias toward basic residues; the sequence is RHSRPRHHHGR. 3 positions are modified to phosphoserine: serine 276, serine 277, and serine 295. Tyrosine 315 carries the sulfotyrosine modification. Residues 340-361 show a composition bias toward basic and acidic residues; the sequence is GRGEHQALRRPSEESLEQENKR. Residues serine 351 and serine 354 each carry the phosphoserine modification. Residue tyrosine 374 is modified to Phosphotyrosine. Phosphoserine is present on residues serine 375 and serine 378. Residues 406–425 show a composition bias toward basic and acidic residues; that stretch reads TDEKRFLGETHHRVQESQRD. The residue at position 441 (tyrosine 441) is a Sulfotyrosine. Composition is skewed to basic and acidic residues over residues 442–451 and 459–472; these read GEEKGEEAAR and DPRD…EARL. Glutamine 476 is modified (pyrrolidone carboxylic acid; in secretogranin-1(476-566)). Residues serine 502, serine 503, and serine 514 each carry the phosphoserine modification. A Sulfotyrosine modification is found at tyrosine 535. Glutamine 567 carries the post-translational modification Pyrrolidone carboxylic acid; in peptide BAM-1745. Residue serine 584 is modified to Phosphoserine. Residues 588–620 are disordered; sequence PDFYDSEEQMSPQHTAENEEEKAGQGVLTEEEE. Tyrosine 591 carries the post-translational modification Sulfotyrosine. 2 positions are modified to phosphoserine: serine 593 and serine 598. Position 634 is a pyrrolidone carboxylic acid; in Secretolytin; partial (glutamine 634).

The protein belongs to the chromogranin/secretogranin protein family. In terms of assembly, interacts with ITPR1 in the secretory granules. Post-translationally, O-glycosylated by the trisaccharide, GalNAc-Gal-NeuAc, on 2 sites in the N-terminal. May be glycated. In terms of processing, extensively phosphorylated. Differentially processed on numerous sites throughout the sequence depending on tissue type.

The protein resides in the cytoplasmic vesicle. It localises to the secretory vesicle membrane. Its subcellular location is the secreted. Its function is as follows. Secretogranin-1 is a neuroendocrine secretory granule protein, which may be the precursor for other biologically active peptides. The 16 pairs of basic AA distributed throughout its sequence may be used as proteolytic cleavage sites. Functionally, secretolytin has antibacterial activity. The protein is Secretogranin-1 (CHGB) of Bos taurus (Bovine).